Here is a 661-residue protein sequence, read N- to C-terminus: Heme transporter BhuA (661 aa).

The first 23 residues, 1–23, serve as a signal peptide directing secretion; the sequence is MKFTRTLVLASTSLLATVATSQA. A TBDR plug domain is found at 48–159; the sequence is KDNIEATGGT…AAGAIRYETV (112 aa). The TBDR beta-barrel domain maps to 170 to 661; the sequence is TFGARIIGSY…TFTFQTAFKF (492 aa).

It belongs to the TonB-dependent receptor family.

Its subcellular location is the cell outer membrane. Its function is as follows. Heme transporter. The chain is Heme transporter BhuA (bhuA) from Brucella ovis (strain ATCC 25840 / 63/290 / NCTC 10512).